The primary structure comprises 355 residues: Biotin synthase (355 aa).

Residues 51-275 (NTVKVNYLVN…VCPDKEIRIA (225 aa)) enclose the Radical SAM core domain. Residues Cys66, Cys70, and Cys73 each contribute to the [4Fe-4S] cluster site. The [2Fe-2S] cluster site is built by Cys110, Cys143, Cys203, and Arg273.

Belongs to the radical SAM superfamily. Biotin synthase family. Homodimer. [4Fe-4S] cluster serves as cofactor. It depends on [2Fe-2S] cluster as a cofactor.

It catalyses the reaction (4R,5S)-dethiobiotin + (sulfur carrier)-SH + 2 reduced [2Fe-2S]-[ferredoxin] + 2 S-adenosyl-L-methionine = (sulfur carrier)-H + biotin + 2 5'-deoxyadenosine + 2 L-methionine + 2 oxidized [2Fe-2S]-[ferredoxin]. Its pathway is cofactor biosynthesis; biotin biosynthesis; biotin from 7,8-diaminononanoate: step 2/2. Functionally, catalyzes the conversion of dethiobiotin (DTB) to biotin by the insertion of a sulfur atom into dethiobiotin via a radical-based mechanism. This Saccharopolyspora erythraea (strain ATCC 11635 / DSM 40517 / JCM 4748 / NBRC 13426 / NCIMB 8594 / NRRL 2338) protein is Biotin synthase.